The sequence spans 886 residues: Alanine--tRNA ligase (886 aa).

Zn(2+) is bound by residues H564, H568, C666, and H670.

The protein belongs to the class-II aminoacyl-tRNA synthetase family. Requires Zn(2+) as cofactor.

The protein localises to the cytoplasm. The enzyme catalyses tRNA(Ala) + L-alanine + ATP = L-alanyl-tRNA(Ala) + AMP + diphosphate. In terms of biological role, catalyzes the attachment of alanine to tRNA(Ala) in a two-step reaction: alanine is first activated by ATP to form Ala-AMP and then transferred to the acceptor end of tRNA(Ala). Also edits incorrectly charged Ser-tRNA(Ala) and Gly-tRNA(Ala) via its editing domain. In Prochlorococcus marinus (strain MIT 9301), this protein is Alanine--tRNA ligase.